Reading from the N-terminus, the 362-residue chain is Tyrosine recombinase XerH (362 aa).

The Core-binding (CB) domain occupies 43 to 140 (ECLNELNQAC…ALLGLFSYID (98 aa)). The Tyr recombinase domain occupies 170–357 (KLPTHLNNEE…DKQRLEEAAS (188 aa)). Residues arginine 213, lysine 239, histidine 309, arginine 312, and histidine 335 contribute to the active site. Tyrosine 344 serves as the catalytic O-(3'-phospho-DNA)-tyrosine intermediate.

Belongs to the 'phage' integrase family. XerH subfamily.

The protein resides in the cytoplasm. FtsK is required for recombination. In terms of biological role, site-specific tyrosine recombinase, which acts by catalyzing the cutting and rejoining of the recombining DNA molecules. Involved in chromosome segregation. May contribute to chromosome decatenation. The protein is Tyrosine recombinase XerH of Helicobacter pylori (strain ATCC 700392 / 26695) (Campylobacter pylori).